The chain runs to 211 residues: 2,3-bisphosphoglycerate-dependent phosphoglycerate mutase (211 aa).

Substrate is bound by residues 9 to 16 (RHGQSDWN), 22 to 23 (TG), R61, 88 to 91 (ERDY), K99, 115 to 116 (RR), and 159 to 160 (GN). H10 acts as the Tele-phosphohistidine intermediate in catalysis. Residue E88 is the Proton donor/acceptor of the active site.

Belongs to the phosphoglycerate mutase family. BPG-dependent PGAM subfamily. As to quaternary structure, homodimer.

It catalyses the reaction (2R)-2-phosphoglycerate = (2R)-3-phosphoglycerate. It functions in the pathway carbohydrate degradation; glycolysis; pyruvate from D-glyceraldehyde 3-phosphate: step 3/5. Functionally, catalyzes the interconversion of 2-phosphoglycerate and 3-phosphoglycerate. The sequence is that of 2,3-bisphosphoglycerate-dependent phosphoglycerate mutase from Rhizobium rhizogenes (strain K84 / ATCC BAA-868) (Agrobacterium radiobacter).